The sequence spans 384 residues: Tryptophan--tRNA ligase (384 aa).

The short motif at 81-89 is the 'HIGH' region element; that stretch reads PSGPMHIGH. The 'KMSKS' region signature appears at 252–256; sequence KMSAS.

Belongs to the class-I aminoacyl-tRNA synthetase family.

The protein resides in the cytoplasm. The catalysed reaction is tRNA(Trp) + L-tryptophan + ATP = L-tryptophyl-tRNA(Trp) + AMP + diphosphate + H(+). The chain is Tryptophan--tRNA ligase from Thermococcus kodakarensis (strain ATCC BAA-918 / JCM 12380 / KOD1) (Pyrococcus kodakaraensis (strain KOD1)).